We begin with the raw amino-acid sequence, 508 residues long: Purine-cytosine permease fcyB (508 aa).

Residues methionine 1–asparagine 72 are Cytoplasmic-facing. Residues isoleucine 73–glycine 93 traverse the membrane as a helical segment. At lysine 94–alanine 104 the chain is on the extracellular side. The helical transmembrane segment at isoleucine 105–phenylalanine 125 threads the bilayer. Residues glycine 126–glycine 147 are Cytoplasmic-facing. The helical transmembrane segment at phenylalanine 148–alanine 168 threads the bilayer. Residues glutamine 169–aspartate 177 lie on the Extracellular side of the membrane. The helical transmembrane segment at valine 178–glycine 198 threads the bilayer. The Cytoplasmic segment spans residues tyrosine 199–lysine 200. Residues valine 201–leucine 221 form a helical membrane-spanning segment. Residues glycine 222–glycine 243 lie on the Extracellular side of the membrane. The chain crosses the membrane as a helical span at residues serine 244–alanine 264. Over aspartate 265–lysine 278 the chain is Cytoplasmic. A helical membrane pass occupies residues isoleucine 279–valine 299. At alanine 300 to glycine 323 the chain is on the extracellular side. A helical membrane pass occupies residues leucine 324–alanine 344. Residues leucine 345 to arginine 374 lie on the Cytoplasmic side of the membrane. A helical membrane pass occupies residues phenylalanine 375–histidine 395. Residues phenylalanine 396–methionine 404 are Extracellular-facing. A helical transmembrane segment spans residues asparagine 405 to phenylalanine 425. Residues lysine 426–lysine 442 are Cytoplasmic-facing. The chain crosses the membrane as a helical span at residues leucine 443–glycine 463. At methionine 464–alanine 477 the chain is on the extracellular side. A helical transmembrane segment spans residues alanine 478 to leucine 498. Over arginine 499–arginine 508 the chain is Cytoplasmic.

This sequence belongs to the purine-cytosine permease (2.A.39) family.

It is found in the cell membrane. Its function is as follows. This permease has a broad specificity towards purines, and also transports cytosine, but neither uracil nor thymine. Contributes very little in purine uptake. Its major role may be the uptake of cytosine. This is Purine-cytosine permease fcyB (fcyB) from Emericella nidulans (strain FGSC A4 / ATCC 38163 / CBS 112.46 / NRRL 194 / M139) (Aspergillus nidulans).